Here is a 241-residue protein sequence, read N- to C-terminus: Alpha/beta-tubulin-N-acetyltransferase 9 (241 aa).

An N-acetyltransferase domain is found at 34-181 (EELRHLTASE…VTLRLAVSEP (148 aa)).

It belongs to the acetyltransferase family. GNAT subfamily.

It carries out the reaction N-terminal L-methionyl-[tubulin] + acetyl-CoA = N-terminal N(alpha)-acetyl-L-methionyl-[tubulin] + CoA + H(+). Its function is as follows. N-acetyltransferase that mediates the acetylation of the N-terminal residues of alpha- and beta-tubulin. In Mus musculus (Mouse), this protein is Alpha/beta-tubulin-N-acetyltransferase 9 (Nat9).